We begin with the raw amino-acid sequence, 526 residues long: ESX-1 secretion-associated protein EspB (526 aa).

Residues 1-23 (MSEELKYELPGLERKAHECESTR) are compositionally biased toward basic and acidic residues. Disordered regions lie at residues 1–35 (MSEE…KPDE), 91–110 (RQMN…VPDM), and 271–526 (QIQE…GKQQ). The span at 303–328 (GGPGGPGSGSGGGSGGGASGGSGGGT) shows a compositional bias: gly residues. Positions 335-362 (PSTDPSMSPMSTNSAGEEQSSGSPSSGG) are enriched in low complexity. A compositionally biased stretch (gly residues) spans 363-387 (SSSGGSPSGGSPSGGGAPSSGGMPE). Over residues 393–405 (DMPGGPDIPGLDD) the composition is skewed to low complexity. The span at 413 to 429 (AGGGGGGGVGGGGGGGM) shows a compositional bias: gly residues. A compositionally biased stretch (low complexity) spans 430-440 (PAAPLGPAVGA). Residues 451–484 (RGGGVGVPTGTGGGAGGMMGGGMGGMGAGHGQGQ) are compositionally biased toward gly residues. The segment covering 485–508 (GKEKKRDPKLAPDEDLYTEDRAHS) has biased composition (basic and acidic residues).

It belongs to the EspB family.

It localises to the secreted. Involved in DNA conjugation, at least in the recipient strain. The sequence is that of ESX-1 secretion-associated protein EspB from Mycolicibacterium smegmatis (strain MKD8) (Mycobacterium smegmatis).